The chain runs to 149 residues: Lymphocyte antigen 6 complex locus protein G5c (149 aa).

The N-terminal stretch at 1-41 (MLFMAGPAASWSLRPLGLHGVPQALCAVLLTVLVMKTLVLG) is a signal peptide. The region spanning 59–149 (LNCYRCLLET…NPDNRKNSMH (91 aa)) is the UPAR/Ly6 domain. 5 disulfides stabilise this stretch: cysteine 61–cysteine 88, cysteine 64–cysteine 73, cysteine 80–cysteine 106, cysteine 115–cysteine 132, and cysteine 133–cysteine 138. A glycan (N-linked (GlcNAc...) asparagine) is linked at asparagine 95.

Forms oligomers. N-glycosylated. As to expression, detected in adult brain.

It is found in the secreted. Its function is as follows. May have a role in hematopoietic cell differentiation. In Mus musculus (Mouse), this protein is Lymphocyte antigen 6 complex locus protein G5c (Ly6g5c).